The primary structure comprises 408 residues: Aspartate aminotransferase (408 aa).

L-aspartate is bound by residues G45, W134, and N184. K247 is subject to N6-(pyridoxal phosphate)lysine. R382 is a binding site for L-aspartate.

The protein belongs to the class-I pyridoxal-phosphate-dependent aminotransferase family. Homodimer. Requires pyridoxal 5'-phosphate as cofactor.

The protein localises to the cytoplasm. The enzyme catalyses L-aspartate + 2-oxoglutarate = oxaloacetate + L-glutamate. Its function is as follows. Catalyzes the reversible conversion of aspartate and 2-oxoglutarate to glutamate and oxaloacetate. Does not have prephenate aminotransferase activity. This is Aspartate aminotransferase from Streptomyces avermitilis (strain ATCC 31267 / DSM 46492 / JCM 5070 / NBRC 14893 / NCIMB 12804 / NRRL 8165 / MA-4680).